Here is a 100-residue protein sequence, read N- to C-terminus: Urease subunit gamma (100 aa).

The protein belongs to the urease gamma subunit family. As to quaternary structure, heterotrimer of UreA (gamma), UreB (beta) and UreC (alpha) subunits. Three heterotrimers associate to form the active enzyme.

It localises to the cytoplasm. It carries out the reaction urea + 2 H2O + H(+) = hydrogencarbonate + 2 NH4(+). Its pathway is nitrogen metabolism; urea degradation; CO(2) and NH(3) from urea (urease route): step 1/1. The polypeptide is Urease subunit gamma (Thermosynechococcus vestitus (strain NIES-2133 / IAM M-273 / BP-1)).